The sequence spans 341 residues: UDP-N-acetylenolpyruvoylglucosamine reductase (341 aa).

An FAD-binding PCMH-type domain is found at 12-182; that stretch reads LSAYAKRLDI…ISVGLLLKKN (171 aa). Arg158 is an active-site residue. Ser228 functions as the Proton donor in the catalytic mechanism. Glu324 is a catalytic residue.

Belongs to the MurB family. It depends on FAD as a cofactor.

The protein resides in the cytoplasm. It carries out the reaction UDP-N-acetyl-alpha-D-muramate + NADP(+) = UDP-N-acetyl-3-O-(1-carboxyvinyl)-alpha-D-glucosamine + NADPH + H(+). The protein operates within cell wall biogenesis; peptidoglycan biosynthesis. In terms of biological role, cell wall formation. The sequence is that of UDP-N-acetylenolpyruvoylglucosamine reductase from Photorhabdus laumondii subsp. laumondii (strain DSM 15139 / CIP 105565 / TT01) (Photorhabdus luminescens subsp. laumondii).